Here is a 655-residue protein sequence, read N- to C-terminus: Archaeal Lon protease (655 aa).

Over 1–123 (MEENIESVEE…KAEREKRDRS (123 aa)) the chain is Cytoplasmic. 57–64 (GEPGTGKS) lines the ATP pocket. A helical transmembrane segment spans residues 124 to 144 (RSIMFVIFSVVLLGIIAAIVL). Position 145 (Arg-145) is a topological domain, extracellular. Residues 146 to 166 (SITLIFFAIMAAAFLYMAMAF) form a helical membrane-spanning segment. At 167-655 (NPVIRNEKAM…ASTRAGQNVA (489 aa)) the chain is on the cytoplasmic side. Residues 433-618 (GSVVGMVNGL…EDVLKVALVN (186 aa)) enclose the Lon proteolytic domain. Catalysis depends on residues Ser-525 and Lys-568.

It belongs to the peptidase S16 family. Archaeal LonB subfamily. As to quaternary structure, homohexamer. Organized in a ring with a central cavity.

It localises to the cell membrane. Functionally, ATP-dependent serine protease that mediates the selective degradation of mutant and abnormal proteins as well as certain short-lived regulatory proteins. Degrades polypeptides processively. The chain is Archaeal Lon protease from Thermoplasma volcanium (strain ATCC 51530 / DSM 4299 / JCM 9571 / NBRC 15438 / GSS1).